A 255-amino-acid chain; its full sequence is Acetylglutamate kinase (255 aa).

Residues 40 to 41, R62, and N153 each bind substrate; that span reads GG.

The protein belongs to the acetylglutamate kinase family. ArgB subfamily.

It is found in the cytoplasm. The catalysed reaction is N-acetyl-L-glutamate + ATP = N-acetyl-L-glutamyl 5-phosphate + ADP. It functions in the pathway amino-acid biosynthesis; L-arginine biosynthesis; N(2)-acetyl-L-ornithine from L-glutamate: step 2/4. Functionally, catalyzes the ATP-dependent phosphorylation of N-acetyl-L-glutamate. This chain is Acetylglutamate kinase, found in Bacillus thuringiensis (strain Al Hakam).